The following is a 1975-amino-acid chain: Golgi-specific brefeldin A-resistance guanine nucleotide exchange factor 1 homolog (1975 aa).

Disordered stretches follow at residues 216-243 (NPTEKRQKRKKKRQLSVHIETKAKEPEN) and 299-352 (ISAG…EEKM). The span at 221 to 230 (RQKRKKKRQL) shows a compositional bias: basic residues. An SEC7 domain is found at 624–812 (QIIEQKKRKR…ADMYQAIKTE (189 aa)). Positions 1264 to 1277 (QSLRVGGDQQQQRM) are enriched in polar residues. 5 disordered regions span residues 1264–1318 (QSLR…DLES), 1447–1473 (DEKAVKKHHHHHHGHKKKELCTDVTED), 1699–1751 (IKDT…ATAQ), 1788–1854 (VHSG…QYAY), and 1877–1975 (YANQ…QEKP). A compositionally biased stretch (basic and acidic residues) spans 1291-1309 (GAHEERAYTSEGEERRRGG). Basic residues predominate over residues 1451–1464 (VKKHHHHHHGHKKK). Low complexity predominate over residues 1734–1751 (SNSTAATSTSDPSIATAQ). Over residues 1797-1808 (GSPPQTEPPASS) the composition is skewed to pro residues. Low complexity-rich tracts occupy residues 1820–1854 (YEQYRQQQAAAAQQYQQYNQNYPQQQQQQQQQYAY) and 1877–1894 (YANQYQHYQQQQQQQQQH). The span at 1895–1909 (PVNPTSPSVHGQYSV) shows a compositional bias: polar residues. The span at 1938–1957 (TPPQNNAPALAPSAPTTTSA) shows a compositional bias: low complexity.

It is found in the golgi apparatus. The protein resides in the cis-Golgi network. Its subcellular location is the endoplasmic reticulum-Golgi intermediate compartment. Its function is as follows. Guanine-nucleotide exchange factor (GEF) for members of the Arf family of small GTPases involved in trafficking in the early secretory pathway; its GEF activity initiates the coating of nascent vesicles via the localized generation of activated ARFs through replacement of GDP with GTP. Also, plays a role in receptor-mediated endocytosis in oocytes and endosomal trafficking. Involved in vesicle retrograde transport from the ERGIC and cis-Golgi compartments to the endoplasmic reticulum (ER). Plays a role in maintaining mitochondrial morphology, network organization and function. May be required for the basolateral cell membrane localization of the serine threonine protein kinase sgk-1 in intestinal cells. The polypeptide is Golgi-specific brefeldin A-resistance guanine nucleotide exchange factor 1 homolog (Caenorhabditis elegans).